A 320-amino-acid chain; its full sequence is MHGQALIDRLGDRLAGLRGRLTPNAEMDKITWFRAGGLAEVFFQPADEEDLAAFLRAVPEEIPLTIVGVGSNLLVRDGGIPGFVIRLSAKGFGEAEIVSPIRIKAGAATPDKRVAALALEAGIGGFHFYHGIPGAIGGALRMNAGANGVETRERVVEVRALDRKGNVQTMSNAEMGYAYRHSAAPVGLIFTSAVFEGFAEDKATIKAAMDAVQNHRETVQPIREKTGGSTFKNPEGTSAWKEIDKAGCRGLMIGGAQMSPMHCNFMINTGTATGYDLEYLGETVRARVLEHSGIRLQWEIKRIGNFRPGHAVQEFLGQLL.

In terms of domain architecture, FAD-binding PCMH-type spans 34–200; the sequence is RAGGLAEVFF…TSAVFEGFAE (167 aa). R180 is a catalytic residue. S229 serves as the catalytic Proton donor. E299 is an active-site residue.

Belongs to the MurB family. FAD serves as cofactor.

It localises to the cytoplasm. The enzyme catalyses UDP-N-acetyl-alpha-D-muramate + NADP(+) = UDP-N-acetyl-3-O-(1-carboxyvinyl)-alpha-D-glucosamine + NADPH + H(+). The protein operates within cell wall biogenesis; peptidoglycan biosynthesis. In terms of biological role, cell wall formation. In Mesorhizobium japonicum (strain LMG 29417 / CECT 9101 / MAFF 303099) (Mesorhizobium loti (strain MAFF 303099)), this protein is UDP-N-acetylenolpyruvoylglucosamine reductase.